The chain runs to 848 residues: Translation initiation factor IF-2 (848 aa).

Residues 90-253 form a disordered region; the sequence is RTYIKRAELQ…PKEKRHAFER (164 aa). The segment covering 105–170 has biased composition (low complexity); the sequence is EAPAPEEPVQ…SAEPAIAPED (66 aa). Basic residues-rich tracts occupy residues 204–215 and 236–248; these read PKKKQAGHRGPR and KPLRAKKKPKEKR. Positions 344–511 constitute a tr-type G domain; the sequence is KRAPVVSVMG…AVLLQAEILE (168 aa). Residues 353 to 360 are G1; that stretch reads GHVDHGKT. 353–360 contacts GTP; it reads GHVDHGKT. Positions 378–382 are G2; the sequence is GITQH. Positions 399-402 are G3; that stretch reads DTPG. GTP contacts are provided by residues 399–403 and 453–456; these read DTPGH and NKMD. Residues 453–456 form a G4 region; the sequence is NKMD. The G5 stretch occupies residues 489 to 491; it reads SAH.

This sequence belongs to the TRAFAC class translation factor GTPase superfamily. Classic translation factor GTPase family. IF-2 subfamily.

The protein localises to the cytoplasm. In terms of biological role, one of the essential components for the initiation of protein synthesis. Protects formylmethionyl-tRNA from spontaneous hydrolysis and promotes its binding to the 30S ribosomal subunits. Also involved in the hydrolysis of GTP during the formation of the 70S ribosomal complex. The chain is Translation initiation factor IF-2 from Marinobacter nauticus (strain ATCC 700491 / DSM 11845 / VT8) (Marinobacter aquaeolei).